A 521-amino-acid chain; its full sequence is Zinc finger protein GLIS2 (521 aa).

An interaction with CTNND1 region spans residues 35-174 (ALHRELGLVD…AKQLVCRWAK (140 aa)). 2 disordered regions span residues 41–63 (GLVD…LLNP) and 84–110 (SPPS…DLPP). Over residues 49–58 (PGSPGSPPPG) the composition is skewed to pro residues. Positions 71–137 (GRFSAAPLVD…SSFQFFLPLG (67 aa)) are transcription activation. The segment covering 84-100 (SPPSGLDSPNGSSSLSP) has biased composition (low complexity). Positions 148–171 (SFLPPPKDKCLSPELPLAKQLVCR) are transcription repression. The C2H2-type 1 zinc finger occupies 168–193 (LVCRWAKCNQLFELLQDLVDHVNDHH). The C2H2-type 2; atypical zinc finger occupies 202-229 (YCCHWEGCARHGRGFNARYKMLIHIRTH). C2H2-type zinc fingers lie at residues 235–257 (HRCP…NRSH), 263–287 (YVCP…TRTH), and 293–317 (YYCK…IKAH). Residues 436–501 (AGSKAEGEKG…NSAASSPEVL (66 aa)) form a disordered region. Positions 455 to 470 (GLEDHKTPLERTERSR) are enriched in basic and acidic residues. Positions 487–496 (DLSTGNSAAS) are enriched in polar residues.

Belongs to the GLI C2H2-type zinc-finger protein family. In terms of assembly, interacts with CTBP1 and HDAC3. Interacts with CTNNB1 and CTNND1. Interacts with SUFU. Post-translationally, C-terminus cleavage is induced by interaction with CTNND1 and enhances by Src tyrosine kinase. Expressed at high levels in kidney, and at lower levels in heart and lung.

It localises to the nucleus speckle. It is found in the cytoplasm. Its function is as follows. Can act either as a transcriptional repressor or as a transcriptional activator, depending on the cell context. Acts as a repressor of the Hedgehog signaling pathway. Represses the Hedgehog-dependent expression of Wnt4. Necessary to maintain the differentiated epithelial phenotype in renal cells through the inhibition of SNAI1, which itself induces the epithelial-to-mesenchymal transition. Represses transcriptional activation by CTNNB1 in the Wnt signaling pathway. May act by recruiting the corepressors CTBP1 and HDAC3. May be involved in neuron differentiation. The polypeptide is Zinc finger protein GLIS2 (Glis2) (Mus musculus (Mouse)).